The chain runs to 129 residues: Follitropin subunit beta (129 aa).

The first 18 residues, 1-18, serve as a signal peptide directing secretion; it reads MKSIQFCFFFCCWKAICC. 6 disulfides stabilise this stretch: C21–C69, C35–C84, C38–C122, C46–C100, C50–C102, and C105–C112. 2 N-linked (GlcNAc...) asparagine glycosylation sites follow: N25 and N42.

This sequence belongs to the glycoprotein hormones subunit beta family. As to quaternary structure, heterodimer. The active follitropin is a heterodimer composed of an alpha chain/CGA shared with other hormones and a unique beta chain/FSHB shown here.

The protein localises to the secreted. Its function is as follows. Together with the alpha chain CGA constitutes follitropin, the follicle-stimulating hormone, and provides its biological specificity to the hormone heterodimer. Binds FSHR, a G protein-coupled receptor, on target cells to activate downstream signaling pathways. Follitropin is involved in follicle development and spermatogenesis in reproductive organs. This is Follitropin subunit beta (FSHB) from Cavia porcellus (Guinea pig).